The chain runs to 356 residues: Phospho-2-dehydro-3-deoxyheptonate aldolase, Tyr-sensitive (356 aa).

This sequence belongs to the class-I DAHP synthase family.

The catalysed reaction is D-erythrose 4-phosphate + phosphoenolpyruvate + H2O = 7-phospho-2-dehydro-3-deoxy-D-arabino-heptonate + phosphate. Its pathway is metabolic intermediate biosynthesis; chorismate biosynthesis; chorismate from D-erythrose 4-phosphate and phosphoenolpyruvate: step 1/7. Its function is as follows. Stereospecific condensation of phosphoenolpyruvate (PEP) and D-erythrose-4-phosphate (E4P) giving rise to 3-deoxy-D-arabino-heptulosonate-7-phosphate (DAHP). This is Phospho-2-dehydro-3-deoxyheptonate aldolase, Tyr-sensitive (aroF) from Salmonella typhi.